The sequence spans 144 residues: Large ribosomal subunit protein uL11 (144 aa).

This sequence belongs to the universal ribosomal protein uL11 family. As to quaternary structure, part of the ribosomal stalk of the 50S ribosomal subunit. Interacts with L10 and the large rRNA to form the base of the stalk. L10 forms an elongated spine to which L12 dimers bind in a sequential fashion forming a multimeric L10(L12)X complex. Post-translationally, one or more lysine residues are methylated.

Forms part of the ribosomal stalk which helps the ribosome interact with GTP-bound translation factors. The protein is Large ribosomal subunit protein uL11 of Acidiphilium cryptum (strain JF-5).